Reading from the N-terminus, the 95-residue chain is Aspartyl/glutamyl-tRNA(Asn/Gln) amidotransferase subunit C (95 aa).

The protein belongs to the GatC family. Heterotrimer of A, B and C subunits.

It catalyses the reaction L-glutamyl-tRNA(Gln) + L-glutamine + ATP + H2O = L-glutaminyl-tRNA(Gln) + L-glutamate + ADP + phosphate + H(+). The enzyme catalyses L-aspartyl-tRNA(Asn) + L-glutamine + ATP + H2O = L-asparaginyl-tRNA(Asn) + L-glutamate + ADP + phosphate + 2 H(+). Its function is as follows. Allows the formation of correctly charged Asn-tRNA(Asn) or Gln-tRNA(Gln) through the transamidation of misacylated Asp-tRNA(Asn) or Glu-tRNA(Gln) in organisms which lack either or both of asparaginyl-tRNA or glutaminyl-tRNA synthetases. The reaction takes place in the presence of glutamine and ATP through an activated phospho-Asp-tRNA(Asn) or phospho-Glu-tRNA(Gln). The protein is Aspartyl/glutamyl-tRNA(Asn/Gln) amidotransferase subunit C of Chromobacterium violaceum (strain ATCC 12472 / DSM 30191 / JCM 1249 / CCUG 213 / NBRC 12614 / NCIMB 9131 / NCTC 9757 / MK).